A 171-amino-acid polypeptide reads, in one-letter code: 3-hydroxydecanoyl-[acyl-carrier-protein] dehydratase (171 aa).

His-70 is a catalytic residue.

Belongs to the thioester dehydratase family. FabA subfamily. Homodimer.

It is found in the cytoplasm. It catalyses the reaction a (3R)-hydroxyacyl-[ACP] = a (2E)-enoyl-[ACP] + H2O. The enzyme catalyses (3R)-hydroxydecanoyl-[ACP] = (2E)-decenoyl-[ACP] + H2O. It carries out the reaction (2E)-decenoyl-[ACP] = (3Z)-decenoyl-[ACP]. Its pathway is lipid metabolism; fatty acid biosynthesis. In terms of biological role, necessary for the introduction of cis unsaturation into fatty acids. Catalyzes the dehydration of (3R)-3-hydroxydecanoyl-ACP to E-(2)-decenoyl-ACP and then its isomerization to Z-(3)-decenoyl-ACP. Can catalyze the dehydratase reaction for beta-hydroxyacyl-ACPs with saturated chain lengths up to 16:0, being most active on intermediate chain length. In Shewanella pealeana (strain ATCC 700345 / ANG-SQ1), this protein is 3-hydroxydecanoyl-[acyl-carrier-protein] dehydratase.